Reading from the N-terminus, the 357-residue chain is UDP-N-acetylglucosamine--N-acetylmuramyl-(pentapeptide) pyrophosphoryl-undecaprenol N-acetylglucosamine transferase (357 aa).

Residues threonine 15–glycine 17, asparagine 123, arginine 164, serine 190, and glutamine 284 contribute to the UDP-N-acetyl-alpha-D-glucosamine site.

This sequence belongs to the glycosyltransferase 28 family. MurG subfamily.

It is found in the cell inner membrane. The catalysed reaction is di-trans,octa-cis-undecaprenyl diphospho-N-acetyl-alpha-D-muramoyl-L-alanyl-D-glutamyl-meso-2,6-diaminopimeloyl-D-alanyl-D-alanine + UDP-N-acetyl-alpha-D-glucosamine = di-trans,octa-cis-undecaprenyl diphospho-[N-acetyl-alpha-D-glucosaminyl-(1-&gt;4)]-N-acetyl-alpha-D-muramoyl-L-alanyl-D-glutamyl-meso-2,6-diaminopimeloyl-D-alanyl-D-alanine + UDP + H(+). It functions in the pathway cell wall biogenesis; peptidoglycan biosynthesis. In terms of biological role, cell wall formation. Catalyzes the transfer of a GlcNAc subunit on undecaprenyl-pyrophosphoryl-MurNAc-pentapeptide (lipid intermediate I) to form undecaprenyl-pyrophosphoryl-MurNAc-(pentapeptide)GlcNAc (lipid intermediate II). In Synechococcus elongatus (strain ATCC 33912 / PCC 7942 / FACHB-805) (Anacystis nidulans R2), this protein is UDP-N-acetylglucosamine--N-acetylmuramyl-(pentapeptide) pyrophosphoryl-undecaprenol N-acetylglucosamine transferase.